We begin with the raw amino-acid sequence, 1043 residues long: Integrator complex subunit 3 (1043 aa).

Methionine 1 carries the post-translational modification N-acetylmethionine. Serine 502, serine 537, and serine 995 each carry phosphoserine. The tract at residues 977 to 1043 (YEDSSTKPPK…GSSAVGSDSD (67 aa)) is disordered. Residues 1008-1022 (AEEESGSSSASEEED) are compositionally biased toward acidic residues.

It belongs to the Integrator subunit 3 family. In terms of assembly, component of the Integrator complex, composed of core subunits INTS1, INTS2, INTS3, INTS4, INTS5, INTS6, INTS7, INTS8, INTS9/RC74, INTS10, INTS11/CPSF3L, INTS12, INTS13, INTS14 and INTS15. The core complex associates with protein phosphatase 2A subunits PPP2CA and PPP2R1A, to form the Integrator-PP2A (INTAC) complex. Component of the SOSS complex, composed of SOSS-B (SOSS-B1/NABP2 or SOSS-B2/NABP1), SOSS-A/INTS3 and SOSS-C/INIP. SOSS complexes containing SOSS-B1/NABP2 are more abundant than complexes containing SOSS-B2/NABP1. Interacts with SOSS-B1/NABP2, SOSS-B2/NABP1 and SOSS-C/INIP; the interaction is direct. Interacts with NBN/NBS1.

It localises to the nucleus. Its subcellular location is the cytoplasm. Functionally, component of the integrator complex, a multiprotein complex that terminates RNA polymerase II (Pol II) transcription in the promoter-proximal region of genes. The integrator complex provides a quality checkpoint during transcription elongation by driving premature transcription termination of transcripts that are unfavorably configured for transcriptional elongation: the complex terminates transcription by (1) catalyzing dephosphorylation of the C-terminal domain (CTD) of Pol II subunit POLR2A/RPB1 and SUPT5H/SPT5, (2) degrading the exiting nascent RNA transcript via endonuclease activity and (3) promoting the release of Pol II from bound DNA. The integrator complex is also involved in terminating the synthesis of non-coding Pol II transcripts, such as enhancer RNAs (eRNAs), small nuclear RNAs (snRNAs), telomerase RNAs and long non-coding RNAs (lncRNAs). Within the integrator complex, INTS3 is involved in the post-termination step: INTS3 binds INTS7 in the open conformation of integrator complex and prevents the rebinding of Pol II to the integrator after termination cycle. Mediates recruitment of cytoplasmic dynein to the nuclear envelope, probably as component of the integrator complex. In terms of biological role, component of the SOSS complex, a multiprotein complex that functions downstream of the MRN complex to promote DNA repair and G2/M checkpoint. The SOSS complex associates with single-stranded DNA at DNA lesions and influences diverse endpoints in the cellular DNA damage response including cell-cycle checkpoint activation, recombinational repair and maintenance of genomic stability. The SOSS complex is required for efficient homologous recombination-dependent repair of double-strand breaks (DSBs) and ATM-dependent signaling pathways. In the SOSS complex, it is required for the assembly of the complex and for stabilization of the complex at DNA damage sites. In Homo sapiens (Human), this protein is Integrator complex subunit 3.